Reading from the N-terminus, the 217-residue chain is Proteasome subunit beta type-9 (217 aa).

A propeptide spans 1 to 18 (MLEESSEPGWLSEEVKTG) (removed in mature form). The active-site Nucleophile is T19.

This sequence belongs to the peptidase T1B family. In terms of assembly, the 26S proteasome consists of a 20S proteasome core and two 19S regulatory subunits. The 20S proteasome core is composed of 28 subunits that are arranged in four stacked rings, resulting in a barrel-shaped structure. The two end rings are each formed by seven alpha subunits, and the two central rings are each formed by seven beta subunits. The catalytic chamber with the active sites is on the inside of the barrel. Component of the immunoproteasome, where it displaces the equivalent housekeeping subunit PSMB6. Autocleaved. The resulting N-terminal Thr residue of the mature subunit is responsible for the nucleophile proteolytic activity.

Its subcellular location is the cytoplasm. The protein resides in the nucleus. The enzyme catalyses Cleavage of peptide bonds with very broad specificity.. The proteasome is a multicatalytic proteinase complex which is characterized by its ability to cleave peptides with Arg, Phe, Tyr, Leu, and Glu adjacent to the leaving group at neutral or slightly basic pH. The proteasome has an ATP-dependent proteolytic activity. This subunit is involved in antigen processing to generate class I binding peptides. This is Proteasome subunit beta type-9 (psmb9-a) from Salmo salar (Atlantic salmon).